We begin with the raw amino-acid sequence, 187 residues long: ATP-dependent protease subunit HslV (187 aa).

Thr13 is a catalytic residue. Ala172, Cys175, and Thr178 together coordinate Na(+).

Belongs to the peptidase T1B family. HslV subfamily. A double ring-shaped homohexamer of HslV is capped on each side by a ring-shaped HslU homohexamer. The assembly of the HslU/HslV complex is dependent on binding of ATP.

The protein resides in the cytoplasm. The enzyme catalyses ATP-dependent cleavage of peptide bonds with broad specificity.. With respect to regulation, allosterically activated by HslU binding. Its function is as follows. Protease subunit of a proteasome-like degradation complex believed to be a general protein degrading machinery. The polypeptide is ATP-dependent protease subunit HslV (Caulobacter sp. (strain K31)).